The chain runs to 349 residues: Ion-translocating oxidoreductase complex subunit D (349 aa).

3 helical membrane-spanning segments follow: residues 36-56 (CAFFGWGTLIQVLLAIIVALS), 77-99 (SAMLTAILIGVAIPPLAPWWMIV), and 124-144 (AMAAYVLLLVSFPLQMTTWIA). Thr185 is modified (FMN phosphoryl threonine). The next 5 helical transmembrane spans lie at 212-232 (STGVGWFWVNLAYLAGGIVLL), 239-259 (WHISTGVLAGLFVASSVGFLL), 265-285 (ASPLFHLFSGATMLAAFFIAT), 291-311 (ATSPRGRIIFGALIGVLVYII), and 315-335 (GGYPDAFAFAVLLANLCAPFI).

This sequence belongs to the NqrB/RnfD family. In terms of assembly, the complex is composed of six subunits: RnfA, RnfB, RnfC, RnfD, RnfE and RnfG. FMN is required as a cofactor.

The protein localises to the cell inner membrane. Part of a membrane-bound complex that couples electron transfer with translocation of ions across the membrane. This chain is Ion-translocating oxidoreductase complex subunit D, found in Shewanella oneidensis (strain ATCC 700550 / JCM 31522 / CIP 106686 / LMG 19005 / NCIMB 14063 / MR-1).